The primary structure comprises 419 residues: MGKLIIEGPARLNGAVKISGSKNAALPIIAASLICDRGVLLENVPDLMDVRTMIDILNSAGCKTRFAENVLSVNPPEKPNTDIPYELVRKMRASFNVLGPLAAKYGKASVSLPGGCSIGVRPVDYHIEGLQKLGFSINIEHGIVTAELGERPQEVLISLPFPSVGATEHIMTTAAILDGTHTILENAAMEPEIEDLANFLNDMGCKVFGAGTRRIEIFGVEKTRECTHRIIPDRIEAGTYAIAVAATMGDAVIENLQVSHLVALFDVLRSAGVEIQQIDETAIRIKMNQRPQPVKVQITPYPGYPTDLQPQIITFLSIATGTSTVSETVFKSRFQHVDELRRLGAKIEVNDGTAIIYGVENLSGAQVNATDLRAAAALVIAGLMASGTTSINEVDQIFRGYENIVEKLSRLSAVVEYFE.

22 to 23 (KN) contacts phosphoenolpyruvate. Arg-92 contributes to the UDP-N-acetyl-alpha-D-glucosamine binding site. Cys-116 acts as the Proton donor in catalysis. A 2-(S-cysteinyl)pyruvic acid O-phosphothioketal modification is found at Cys-116. Residues Asp-307 and Val-329 each coordinate UDP-N-acetyl-alpha-D-glucosamine.

The protein belongs to the EPSP synthase family. MurA subfamily.

It is found in the cytoplasm. It catalyses the reaction phosphoenolpyruvate + UDP-N-acetyl-alpha-D-glucosamine = UDP-N-acetyl-3-O-(1-carboxyvinyl)-alpha-D-glucosamine + phosphate. It functions in the pathway cell wall biogenesis; peptidoglycan biosynthesis. Cell wall formation. Adds enolpyruvyl to UDP-N-acetylglucosamine. This is UDP-N-acetylglucosamine 1-carboxyvinyltransferase from Pseudothermotoga lettingae (strain ATCC BAA-301 / DSM 14385 / NBRC 107922 / TMO) (Thermotoga lettingae).